An 827-amino-acid chain; its full sequence is Putative potassium transporter 12 (827 aa).

The disordered stretch occupies residues 1–31 (MEEIEEGSSNNSIRRVGTGSSDRRWVDGSEV). The Cytoplasmic portion of the chain corresponds to 1 to 82 (MEEIEEGSSN…AGSHGHNLKD (82 aa)). The helical transmembrane segment at 83 to 103 (LSLLTTLGIAFQTLGVVYGDM) threads the bilayer. At 104–129 (GTSPLYVFSDVFSKVPIRSEVDVLGA) the chain is on the extracellular side. A helical transmembrane segment spans residues 130 to 150 (LSLVIYTIAVIPLAKYVFVVL). Residues 151-216 (KANDNGEGGT…ALETKGYLKT (66 aa)) are Cytoplasmic-facing. A helical membrane pass occupies residues 217 to 237 (LLLLLVLMGTSMIIGDGILTP). The Extracellular segment spans residues 238 to 253 (AMSVMSAMSGLQGEVK). A helical transmembrane segment spans residues 254–274 (GFGTNALVMSSIVILVALFSI). Residues 275 to 281 (QRFGTGK) are Cytoplasmic-facing. The helical transmembrane segment at 282-302 (VGFLFAPVLALWFFSLGAIGI) threads the bilayer. The Extracellular segment spans residues 303 to 335 (YNLLKYDFTVIRALNPFYIVLFFNKNSKQAWSA). A helical membrane pass occupies residues 336–356 (LGGCVLCITGAEAMFADLGHF). The Cytoplasmic portion of the chain corresponds to 357–363 (SVRSIQM). The chain crosses the membrane as a helical span at residues 364 to 384 (AFTCVVFPCLLLAYMGQAAYL). The Extracellular segment spans residues 385–402 (TKHPEASARIFYDSVPKS). Residues 403-423 (LFWPVFVIATLAAMIASQAMI) traverse the membrane as a helical segment. Residues 424-454 (SATFSCVKQAMALGCFPRLKIIHTSKKRIGQ) are Cytoplasmic-facing. A helical transmembrane segment spans residues 455 to 475 (IYIPVINWFLMIMCILVVSIF). The Extracellular segment spans residues 476 to 480 (RSTTH). The next 2 membrane-spanning stretches (helical) occupy residues 481–501 (IANA…VLVT) and 502–522 (LVML…PLIF). Over 523-536 (GSVETIYLLAVLTK) the chain is Extracellular. Residues 537 to 557 (ILEGGWVPLVFATFFLTVMYI) form a helical membrane-spanning segment. Residues 558–827 (WNYGSVLKYQ…ILQAGMTYMV (270 aa)) are Cytoplasmic-facing. Positions 728–750 (RSEPEQELDSEVLPSSSVGSSME) are disordered. The span at 738–748 (EVLPSSSVGSS) shows a compositional bias: low complexity.

Belongs to the HAK/KUP transporter (TC 2.A.72.3) family.

The protein resides in the cell membrane. Putative potassium transporter. This chain is Putative potassium transporter 12 (POT12), found in Arabidopsis thaliana (Mouse-ear cress).